We begin with the raw amino-acid sequence, 443 residues long: KICSTOR complex protein ITFG2 (443 aa).

The FG-GAP 1; atypical repeat unit spans residues 19 to 48 (FPHAICLGDVDNDALNELVVGDTSGKLSVY). S104 is subject to Phosphoserine. Residues 125 to 154 (NTKVMLISDIDGDGCYELVVGYTDRVVRAF) form an FG-GAP 2; atypical repeat. S219 is subject to Phosphoserine.

In terms of assembly, part of the KICSTOR complex composed of KPTN, ITFG2, KICS2 and SZT2. SZT2 probably serves as a link between the other three proteins in the KICSTOR complex and may mediate the direct interaction with the GATOR complex via GATOR1. The KICSTOR complex interacts directly with the GATOR1 complex and most probably indirectly with the GATOR2 complex in an amino acid-independent manner.

The protein localises to the lysosome membrane. Functionally, as part of the KICSTOR complex functions in the amino acid-sensing branch of the TORC1 signaling pathway. Recruits, in an amino acid-independent manner, the GATOR1 complex to the lysosomal membranes and allows its interaction with GATOR2 and the RAG GTPases. Functions upstream of the RAG GTPases and is required to negatively regulate mTORC1 signaling in absence of amino acids. In absence of the KICSTOR complex mTORC1 is constitutively localized to the lysosome and activated. The KICSTOR complex is also probably involved in the regulation of mTORC1 by glucose. The chain is KICSTOR complex protein ITFG2 from Mus musculus (Mouse).